The primary structure comprises 428 residues: 47 kDa outer membrane protein (428 aa).

Positions 1 to 25 are cleaved as a signal peptide; it reads MAKTSKFTQTLLASALAVVAGSASA.

This sequence belongs to the OmpP1/FadL family.

It localises to the cell outer membrane. The protein is 47 kDa outer membrane protein of Pasteurella multocida (strain Pm70).